Reading from the N-terminus, the 272-residue chain is Shikimate dehydrogenase (NADP(+)) (272 aa).

Shikimate-binding positions include 14 to 16 and threonine 61; that span reads SKS. Catalysis depends on lysine 65, which acts as the Proton acceptor. Residue glutamate 77 participates in NADP(+) binding. Positions 86 and 102 each coordinate shikimate. Residues 126-130, 149-154, and methionine 213 each bind NADP(+); these read GAGGA and NRTASR. Residue tyrosine 215 participates in shikimate binding. An NADP(+)-binding site is contributed by glycine 237.

It belongs to the shikimate dehydrogenase family. Homodimer.

The enzyme catalyses shikimate + NADP(+) = 3-dehydroshikimate + NADPH + H(+). It functions in the pathway metabolic intermediate biosynthesis; chorismate biosynthesis; chorismate from D-erythrose 4-phosphate and phosphoenolpyruvate: step 4/7. Involved in the biosynthesis of the chorismate, which leads to the biosynthesis of aromatic amino acids. Catalyzes the reversible NADPH linked reduction of 3-dehydroshikimate (DHSA) to yield shikimate (SA). The protein is Shikimate dehydrogenase (NADP(+)) of Salmonella enteritidis PT4 (strain P125109).